The chain runs to 239 residues: DNA damage-regulated autophagy modulator protein 1 (239 aa).

6 helical membrane-spanning segments follow: residues 15 to 35 (ILVIWSSAGFLFSYIISVLIG), 54 to 74 (SGVFGFMISVSAMLGAATMYT), 91 to 111 (IYFNKISLAIGLFGCIGMGIV), 119 to 139 (VPAVHDAGALITFICGVMYIL), 162 to 182 (MTVSLIAFIAVVPMSVFSILS), and 201 to 221 (TSAICEWTVAFGFNMYFLTFI).

It belongs to the DRAM/TMEM150 family.

The protein resides in the lysosome membrane. Lysosomal modulator of autophagy that plays a central role in p53/TP53-mediated apoptosis. This chain is DNA damage-regulated autophagy modulator protein 1 (dram1), found in Xenopus laevis (African clawed frog).